The following is a 323-amino-acid chain: Ubiquinone biosynthesis protein COQ4, mitochondrial (323 aa).

His203, Asp204, His207, and Glu219 together coordinate Zn(2+).

The protein belongs to the COQ4 family. Component of a multi-subunit COQ enzyme complex, composed of at least COQ3, COQ4, COQ5, COQ6, COQ7 and COQ9. It depends on Zn(2+) as a cofactor.

The protein localises to the mitochondrion inner membrane. The enzyme catalyses a 4-hydroxy-3-methoxy-5-(all-trans-polyprenyl)benzoate + H(+) = a 2-methoxy-6-(all-trans-polyprenyl)phenol + CO2. It participates in cofactor biosynthesis; ubiquinone biosynthesis. Functionally, lyase that catalyzes the C1-decarboxylation of 4-hydroxy-3-methoxy-5-(all-trans-polyprenyl)benzoic acid into 2-methoxy-6-(all-trans-polyprenyl)phenol during ubiquinone biosynthesis. The polypeptide is Ubiquinone biosynthesis protein COQ4, mitochondrial (Eremothecium gossypii (strain ATCC 10895 / CBS 109.51 / FGSC 9923 / NRRL Y-1056) (Yeast)).